The chain runs to 901 residues: Vacuolar protein sorting-associated protein 41 homolog (901 aa).

The tract at residues 1 to 37 (MDETHENEASDSFDPVFENSYHDDVTFNTEDDDEPPL) is disordered. A CHCR repeat occupies 618 to 760 (LRLLLDNADS…VAEFPAHFSQ (143 aa)). Residues 839 to 893 (CSLCAQIIINSNQETTKKFSDIKVFKCGHIFHLACSTSEMERRQSIEEGLCIACS) form an RING-type; atypical zinc finger.

The protein belongs to the VPS41 family. Probable component of the homotypic fusion and vacuole protein sorting (HOPS) complex consisting of the core class C Vps proteins vps-11, vps-16, vps-18, and which further associates with vps-33.1, vps-39 and vps-41.

The protein resides in the endosome membrane. The protein localises to the late endosome membrane. Its subcellular location is the early endosome membrane. It localises to the lysosome membrane. It is found in the golgi apparatus. The protein resides in the trans-Golgi network. The protein localises to the cytoplasmic vesicle. Its subcellular location is the clathrin-coated vesicle. It localises to the cytoplasm. It is found in the cytosol. In terms of biological role, plays a role in vesicle-mediated protein trafficking to lysosomal compartments including the endocytic membrane transport pathways. Believed to act in part as a core component of the putative HOPS endosomal tethering complex which is proposed to be involved in the rab-5-to-rab-7 endosome conversion probably implicating sand-1, and via binding SNAREs and SNARE complexes to mediate tethering and docking events during SNARE-mediated membrane fusion. The HOPS complex is proposed to be recruited to rab-7 on the late endosomal membrane and to regulate late endocytic, phagocytic and autophagic traffic towards lysosomes. Within the HOPS complex, contributes to the normal development of gut granules in the adult intestine. May mediate the tethering of autophagosomes with lysosomes. Has a role in the negative regulation of apoptosis. Required for uptake of exogenous dsRNA which is used in experimental RNA silencing. In Caenorhabditis elegans, this protein is Vacuolar protein sorting-associated protein 41 homolog.